We begin with the raw amino-acid sequence, 660 residues long: Bifunctional polymyxin resistance protein ArnA (660 aa).

Residues 1–304 (MKTVVFAYHD…TLGLVQGSRL (304 aa)) form a formyltransferase ArnAFT region. 86-88 (HLI) provides a ligand contact to (6R)-10-formyltetrahydrofolate. The active-site Proton donor; for formyltransferase activity is His-104. (6R)-10-formyltetrahydrofolate-binding positions include Arg-114 and 136–140 (VKRAD). The tract at residues 314 to 660 (RRTRVLILGV…RTVDLTDKPS (347 aa)) is dehydrogenase ArnADH. NAD(+) is bound by residues Asp-347 and 368 to 369 (DI). UDP-alpha-D-glucuronate contacts are provided by residues Ala-393, Tyr-398, and 432–433 (TS). Glu-434 (proton acceptor; for decarboxylase activity) is an active-site residue. Residues Arg-460, Asn-492, 526 to 535 (KLIDGGKQKR), and Tyr-613 each bind UDP-alpha-D-glucuronate. Arg-619 (proton donor; for decarboxylase activity) is an active-site residue.

This sequence in the N-terminal section; belongs to the Fmt family. UDP-L-Ara4N formyltransferase subfamily. In the C-terminal section; belongs to the NAD(P)-dependent epimerase/dehydratase family. UDP-glucuronic acid decarboxylase subfamily. Homohexamer, formed by a dimer of trimers.

The catalysed reaction is UDP-alpha-D-glucuronate + NAD(+) = UDP-beta-L-threo-pentopyranos-4-ulose + CO2 + NADH. It catalyses the reaction UDP-4-amino-4-deoxy-beta-L-arabinose + (6R)-10-formyltetrahydrofolate = UDP-4-deoxy-4-formamido-beta-L-arabinose + (6S)-5,6,7,8-tetrahydrofolate + H(+). Its pathway is nucleotide-sugar biosynthesis; UDP-4-deoxy-4-formamido-beta-L-arabinose biosynthesis; UDP-4-deoxy-4-formamido-beta-L-arabinose from UDP-alpha-D-glucuronate: step 1/3. It participates in nucleotide-sugar biosynthesis; UDP-4-deoxy-4-formamido-beta-L-arabinose biosynthesis; UDP-4-deoxy-4-formamido-beta-L-arabinose from UDP-alpha-D-glucuronate: step 3/3. It functions in the pathway bacterial outer membrane biogenesis; lipopolysaccharide biosynthesis. Functionally, bifunctional enzyme that catalyzes the oxidative decarboxylation of UDP-glucuronic acid (UDP-GlcUA) to UDP-4-keto-arabinose (UDP-Ara4O) and the addition of a formyl group to UDP-4-amino-4-deoxy-L-arabinose (UDP-L-Ara4N) to form UDP-L-4-formamido-arabinose (UDP-L-Ara4FN). The modified arabinose is attached to lipid A and is required for resistance to polymyxin and cationic antimicrobial peptides. This is Bifunctional polymyxin resistance protein ArnA from Escherichia coli (strain K12 / MC4100 / BW2952).